Consider the following 453-residue polypeptide: Potassium/proton antiporter CemA (453 aa).

4 helical membrane-spanning segments follow: residues 235–255 (YMAC…IIFL), 328–348 (ICTI…ACLL), 378–398 (ILLL…EIII), and 414–434 (VSCF…YWIF).

The protein belongs to the CemA family.

It is found in the plastid. Its subcellular location is the chloroplast inner membrane. The enzyme catalyses K(+)(in) + H(+)(out) = K(+)(out) + H(+)(in). Contributes to K(+)/H(+) antiport activity by supporting proton efflux to control proton extrusion and homeostasis in chloroplasts in a light-dependent manner to modulate photosynthesis. Prevents excessive induction of non-photochemical quenching (NPQ) under continuous-light conditions. Indirectly promotes efficient inorganic carbon uptake into chloroplasts. The polypeptide is Potassium/proton antiporter CemA (Zygnema circumcarinatum (Green alga)).